The sequence spans 877 residues: Phosphoenolpyruvate carboxylase (877 aa).

Catalysis depends on residues histidine 138 and lysine 543.

The protein belongs to the PEPCase type 1 family. Mg(2+) serves as cofactor.

It carries out the reaction oxaloacetate + phosphate = phosphoenolpyruvate + hydrogencarbonate. Forms oxaloacetate, a four-carbon dicarboxylic acid source for the tricarboxylic acid cycle. The protein is Phosphoenolpyruvate carboxylase of Aeromonas salmonicida (strain A449).